Consider the following 326-residue polypeptide: Aspartate carbamoyltransferase catalytic subunit (326 aa).

Carbamoyl phosphate is bound by residues Arg-65 and Thr-66. Position 93 (Lys-93) interacts with L-aspartate. The carbamoyl phosphate site is built by Arg-115, His-143, and Gln-146. 2 residues coordinate L-aspartate: Arg-176 and Arg-230. Residues Gly-271 and Pro-272 each coordinate carbamoyl phosphate.

The protein belongs to the aspartate/ornithine carbamoyltransferase superfamily. ATCase family. Heterododecamer (2C3:3R2) of six catalytic PyrB chains organized as two trimers (C3), and six regulatory PyrI chains organized as three dimers (R2).

It catalyses the reaction carbamoyl phosphate + L-aspartate = N-carbamoyl-L-aspartate + phosphate + H(+). Its pathway is pyrimidine metabolism; UMP biosynthesis via de novo pathway; (S)-dihydroorotate from bicarbonate: step 2/3. Catalyzes the condensation of carbamoyl phosphate and aspartate to form carbamoyl aspartate and inorganic phosphate, the committed step in the de novo pyrimidine nucleotide biosynthesis pathway. This chain is Aspartate carbamoyltransferase catalytic subunit, found in Mesorhizobium japonicum (strain LMG 29417 / CECT 9101 / MAFF 303099) (Mesorhizobium loti (strain MAFF 303099)).